The following is a 274-amino-acid chain: Large ribosomal subunit protein uL2cz/uL2cy (274 aa).

Disordered regions lie at residues 1 to 21 (MAIH…VDSQ) and 224 to 252 (NPVD…GYPA).

Belongs to the universal ribosomal protein uL2 family. In terms of assembly, part of the 50S ribosomal subunit.

The protein localises to the plastid. Its subcellular location is the chloroplast. This Olimarabidopsis pumila (Dwarf rocket) protein is Large ribosomal subunit protein uL2cz/uL2cy (rpl2-A).